The following is a 90-amino-acid chain: Molybdopterin synthase sulfur carrier subunit (90 aa).

1-thioglycine; alternate is present on glycine 90. Glycine 90 carries the glycyl adenylate; alternate modification.

Belongs to the MoaD family. MOCS2A subfamily. Heterotetramer; composed of 2 small (Mocs2A) and 2 large (Mocs2B) subunits. In terms of processing, C-terminal thiocarboxylation occurs in 2 steps, it is first acyl-adenylated (-COAMP) via the hesA/moeB/thiF part of MOCS3, then thiocarboxylated (-COSH) via the rhodanese domain of MOCS3.

Its subcellular location is the cytoplasm. It functions in the pathway cofactor biosynthesis; molybdopterin biosynthesis. Its function is as follows. Acts as a sulfur carrier required for molybdopterin biosynthesis. Component of the molybdopterin synthase complex that catalyzes the conversion of precursor Z into molybdopterin by mediating the incorporation of 2 sulfur atoms into precursor Z to generate a dithiolene group. In the complex, serves as sulfur donor by being thiocarboxylated (-COSH) at its C-terminus by MOCS3. After interaction with Mocs2B, the sulfur is then transferred to precursor Z to form molybdopterin. In Drosophila erecta (Fruit fly), this protein is Molybdopterin synthase sulfur carrier subunit.